Consider the following 513-residue polypeptide: uncharacterized protein (513 aa).

The tract at residues 1–48 (MGSSEEQSVPGDDFYEESGDLNTGLSLVLRPAKSNEGESSLSSPKGSK) is disordered. Polar residues predominate over residues 37–48 (GESSLSSPKGSK). A phosphoserine mark is found at Ser43, Ser84, and Ser123. Disordered stretches follow at residues 210 to 229 (DGNHGNQAKNSGPAETGDLA), 236 to 287 (TRDS…GSKS), 390 to 414 (AKEDTDSTRDPSSQVQFPTHRAEPP), and 453 to 481 (SVLSGDQEEPVGLPAPDSEILQLPGTQGC).

This is an uncharacterized protein from Mus musculus (Mouse).